The primary structure comprises 109 residues: Large ribosomal subunit protein uL24 (109 aa).

It belongs to the universal ribosomal protein uL24 family. As to quaternary structure, part of the 50S ribosomal subunit.

One of two assembly initiator proteins, it binds directly to the 5'-end of the 23S rRNA, where it nucleates assembly of the 50S subunit. Functionally, one of the proteins that surrounds the polypeptide exit tunnel on the outside of the subunit. The polypeptide is Large ribosomal subunit protein uL24 (Legionella pneumophila (strain Corby)).